We begin with the raw amino-acid sequence, 421 residues long: 3-hydroxy-3-methylglutaryl-coenzyme A reductase (421 aa).

Catalysis depends on charge relay system residues glutamate 109, lysine 240, and aspartate 315. The Proton donor role is filled by histidine 410.

Belongs to the HMG-CoA reductase family.

It carries out the reaction (R)-mevalonate + 2 NADP(+) + CoA = (3S)-3-hydroxy-3-methylglutaryl-CoA + 2 NADPH + 2 H(+). The protein operates within metabolic intermediate biosynthesis; (R)-mevalonate biosynthesis; (R)-mevalonate from acetyl-CoA: step 3/3. In terms of biological role, converts HMG-CoA to mevalonate. The protein is 3-hydroxy-3-methylglutaryl-coenzyme A reductase (hmgA) of Aeropyrum pernix (strain ATCC 700893 / DSM 11879 / JCM 9820 / NBRC 100138 / K1).